Here is a 140-residue protein sequence, read N- to C-terminus: Profilin (140 aa).

The protein belongs to the profilin family. In terms of assembly, occurs in many kinds of cells as a complex with monomeric actin in a 1:1 ratio.

Binds to actin and affects the structure of the cytoskeleton. At high concentrations, profilin prevents the polymerization of actin, whereas it enhances it at low concentrations. By binding to PIP2, it inhibits the formation of IP3 and DG. The protein is Profilin of Suberites domuncula (Sponge).